The chain runs to 302 residues: RNA polymerase II holoenzyme cyclin-like subunit (302 aa).

One can recognise a Cyclin N-terminal domain in the interval 53–142 (QQLIKLGKRM…VGECEFSLIS (90 aa)).

It belongs to the cyclin family. Cyclin C subfamily. Component of the srb8-11 complex, a regulatory module of the Mediator complex.

Its subcellular location is the nucleus. Its function is as follows. Component of the srb8-11 complex. The srb8-11 complex is a regulatory module of the Mediator complex which is itself involved in regulation of basal and activated RNA polymerase II-dependent transcription. The srb8-11 complex may be involved in the transcriptional repression of a subset of genes regulated by Mediator. It may inhibit the association of the Mediator complex with RNA polymerase II to form the holoenzyme complex. The srb8-11 complex phosphorylates the C-terminal domain (CTD) of the largest subunit of RNA polymerase II. This Emericella nidulans (strain FGSC A4 / ATCC 38163 / CBS 112.46 / NRRL 194 / M139) (Aspergillus nidulans) protein is RNA polymerase II holoenzyme cyclin-like subunit (ssn8).